The sequence spans 162 residues: UPF0260 protein CC_3276 (162 aa).

Belongs to the UPF0260 family.

This Caulobacter vibrioides (strain ATCC 19089 / CIP 103742 / CB 15) (Caulobacter crescentus) protein is UPF0260 protein CC_3276.